The primary structure comprises 327 residues: Urease accessory protein UreD (327 aa).

Belongs to the UreD family. In terms of assembly, ureD, UreF and UreG form a complex that acts as a GTP-hydrolysis-dependent molecular chaperone, activating the urease apoprotein by helping to assemble the nickel containing metallocenter of UreC. The UreE protein probably delivers the nickel.

It localises to the cytoplasm. Its function is as follows. Required for maturation of urease via the functional incorporation of the urease nickel metallocenter. This is Urease accessory protein UreD from Yersinia enterocolitica serotype O:8 / biotype 1B (strain NCTC 13174 / 8081).